Reading from the N-terminus, the 268-residue chain is Diaminopimelate epimerase (268 aa).

3 residues coordinate substrate: N13, Q46, and N64. Catalysis depends on C73, which acts as the Proton donor. Residues 74–75 (GN), N148, N181, and 199–200 (ER) each bind substrate. C208 acts as the Proton acceptor in catalysis. 209 to 210 (GT) lines the substrate pocket.

The protein belongs to the diaminopimelate epimerase family. As to quaternary structure, homodimer.

It is found in the cytoplasm. It carries out the reaction (2S,6S)-2,6-diaminopimelate = meso-2,6-diaminopimelate. Its pathway is amino-acid biosynthesis; L-lysine biosynthesis via DAP pathway; DL-2,6-diaminopimelate from LL-2,6-diaminopimelate: step 1/1. Its function is as follows. Catalyzes the stereoinversion of LL-2,6-diaminopimelate (L,L-DAP) to meso-diaminopimelate (meso-DAP), a precursor of L-lysine and an essential component of the bacterial peptidoglycan. This is Diaminopimelate epimerase from Sphingopyxis alaskensis (strain DSM 13593 / LMG 18877 / RB2256) (Sphingomonas alaskensis).